The following is a 396-amino-acid chain: Probable porphobilinogen deaminase (396 aa).

The segment at 159–224 (APALHREHER…DTASSSEFEQ (66 aa)) is disordered. Residues 159–245 (APALHREHER…LQQSAMERDP (87 aa)) are insert. A compositionally biased stretch (basic and acidic residues) spans 162–189 (LHREHERRTEAEKEAQSRDAREQRRGDY). Acidic residues predominate over residues 200–215 (LDTEDGEEGAADDGDD). Residue cysteine 328 is modified to S-(dipyrrolylmethanemethyl)cysteine.

It belongs to the HMBS family. The cofactor is dipyrromethane.

The enzyme catalyses 4 porphobilinogen + H2O = hydroxymethylbilane + 4 NH4(+). Its pathway is porphyrin-containing compound metabolism; protoporphyrin-IX biosynthesis; coproporphyrinogen-III from 5-aminolevulinate: step 2/4. Functionally, tetrapolymerization of the monopyrrole PBG into the hydroxymethylbilane pre-uroporphyrinogen in several discrete steps. The protein is Probable porphobilinogen deaminase (hemC) of Halobacterium salinarum (strain ATCC 700922 / JCM 11081 / NRC-1) (Halobacterium halobium).